We begin with the raw amino-acid sequence, 420 residues long: Tyrosine--tRNA ligase (420 aa).

Residue Tyr38 participates in L-tyrosine binding. The 'HIGH' region signature appears at 43 to 52; that stretch reads PTGDSLHIGH. L-tyrosine contacts are provided by Tyr169 and Gln173. Residues 231–235 carry the 'KMSKS' region motif; that stretch reads KFGKS. Lys234 serves as a coordination point for ATP. An S4 RNA-binding domain is found at 353 to 419; it reads KNLVDFLVDT…GKRKYTLVTI (67 aa).

It belongs to the class-I aminoacyl-tRNA synthetase family. TyrS type 1 subfamily. In terms of assembly, homodimer.

It localises to the cytoplasm. It carries out the reaction tRNA(Tyr) + L-tyrosine + ATP = L-tyrosyl-tRNA(Tyr) + AMP + diphosphate + H(+). In terms of biological role, catalyzes the attachment of tyrosine to tRNA(Tyr) in a two-step reaction: tyrosine is first activated by ATP to form Tyr-AMP and then transferred to the acceptor end of tRNA(Tyr). The polypeptide is Tyrosine--tRNA ligase (Lactobacillus helveticus (strain DPC 4571)).